The primary structure comprises 341 residues: DnaJ homolog subfamily C member 22 (341 aa).

A TM2 domain is found at 3–50; that stretch reads KGLLVTYALWAVGGPAGLHHLYLGRDSHALLWMLTLGGGGLGWLWEFW. 7 helical membrane-spanning segments follow: residues 5–25, 30–50, 81–101, 105–125, 135–155, 185–205, and 218–238; these read LLVTYALWAVGGPAGLHHLYL, HALLWMLTLGGGGLGWLWEFW, FAAQVIVGIYFGLVALISLSS, FYIVALPLAVGLGVLLVAAVG, LGAAFLTSPIFYGRPIAILPI, LGLAYLAFTGPLAYSALCNTA, and FLNWFSFFPLLGRLMEFVLLL. The J domain maps to 277–341; sequence LAYQVLGLSE…QPRKPRGSRR (65 aa).

It localises to the membrane. Functionally, may function as a co-chaperone. The protein is DnaJ homolog subfamily C member 22 (DNAJC22) of Pongo abelii (Sumatran orangutan).